The sequence spans 96 residues: (4S)-4-hydroxy-5-phosphonooxypentane-2,3-dione isomerase (96 aa).

Residues 2–91 enclose the ABM domain; that stretch reads HVTLVEINVH…MTGPRKKRLF (90 aa).

This sequence belongs to the LsrG family. In terms of assembly, homodimer.

Its subcellular location is the cytoplasm. It catalyses the reaction (2S)-2-hydroxy-3,4-dioxopentyl phosphate = 3-hydroxy-2,4-dioxopentyl phosphate. Its function is as follows. Involved in the degradation of phospho-AI-2, thereby terminating induction of the lsr operon and closing the AI-2 signaling cycle. Catalyzes the conversion of (4S)-4-hydroxy-5-phosphonooxypentane-2,3-dione (P-DPD) to 3-hydroxy-5-phosphonooxypentane-2,4-dione (P-HPD). This Escherichia coli O157:H7 protein is (4S)-4-hydroxy-5-phosphonooxypentane-2,3-dione isomerase.